The sequence spans 453 residues: UDP-glycosyltransferase 76E1 (453 aa).

UDP-alpha-D-glucose contacts are provided by residues serine 272, 331–333 (APQ), 348–356 (HCGWNSTLE), and 370–373 (TGDQ).

It belongs to the UDP-glycosyltransferase family.

Its function is as follows. Possesses low quercetin 3-O-glucosyltransferase and 7-O-glucosyltransferase activities in vitro. This Arabidopsis thaliana (Mouse-ear cress) protein is UDP-glycosyltransferase 76E1 (UGT76E1).